A 700-amino-acid polypeptide reads, in one-letter code: Serine/threonine-protein kinase WNK1 (700 aa).

A Protein kinase domain is found at 24 to 281; sequence GRYNEVLGKG…ARELLDDPFL (258 aa). ATP-binding positions include 104-107 and lysine 154; that span reads TELF. Aspartate 171 acts as the Proton acceptor in catalysis. Low complexity predominate over residues 314 to 339; that stretch reads NYPSNSSSLNRQYSNGNYPSNSSSLN. Disordered stretches follow at residues 314-345, 551-575, and 647-666; these read NYPSNSSSLNRQYSNGNYPSNSSSLNRQYSNG, ESRELSSIDSGHNHSEEEEEEEVLY, and ESGEEVEISPKDGFLGSVSG. The span at 551 to 565 shows a compositional bias: basic and acidic residues; the sequence is ESRELSSIDSGHNHS. Residues 566–575 are compositionally biased toward acidic residues; it reads EEEEEEEVLY.

This sequence belongs to the protein kinase superfamily. Ser/Thr protein kinase family. WNK subfamily. Post-translationally, autophosphorylated.

The catalysed reaction is L-seryl-[protein] + ATP = O-phospho-L-seryl-[protein] + ADP + H(+). It carries out the reaction L-threonyl-[protein] + ATP = O-phospho-L-threonyl-[protein] + ADP + H(+). Regulates flowering time by modulating the photoperiod pathway. Phosphorylates APRR3. This chain is Serine/threonine-protein kinase WNK1 (WNK1), found in Arabidopsis thaliana (Mouse-ear cress).